We begin with the raw amino-acid sequence, 151 residues long: Large ribosomal subunit protein uL13 (151 aa).

The protein belongs to the universal ribosomal protein uL13 family. As to quaternary structure, part of the 50S ribosomal subunit.

In terms of biological role, this protein is one of the early assembly proteins of the 50S ribosomal subunit, although it is not seen to bind rRNA by itself. It is important during the early stages of 50S assembly. This is Large ribosomal subunit protein uL13 from Nostoc sp. (strain PCC 7120 / SAG 25.82 / UTEX 2576).